A 202-amino-acid chain; its full sequence is Cytochrome c oxidase assembly protein CtaG (202 aa).

At 1 to 14 (MSENAGTPKKQGRN) the chain is on the cytoplasmic side. A helical; Signal-anchor for type II membrane protein transmembrane segment spans residues 15–37 (NGAVVMMCLSFVFGMGAMSYAAV). Topologically, residues 38 to 202 (PLYRIFCQVT…GGAEKIEKKL (165 aa)) are periplasmic.

This sequence belongs to the COX11/CtaG family.

Its subcellular location is the cell inner membrane. Its function is as follows. Exerts its effect at some terminal stage of cytochrome c oxidase synthesis, probably by being involved in the insertion of the copper B into subunit I. The polypeptide is Cytochrome c oxidase assembly protein CtaG (Rhizobium johnstonii (strain DSM 114642 / LMG 32736 / 3841) (Rhizobium leguminosarum bv. viciae)).